Here is a 130-residue protein sequence, read N- to C-terminus: MSDEFYYGTGRRKSAVARTRLYKGNGRILVNDRPFEEYFPRPTLLAIVRQALALTKLEGRLDVKVNVAGGGMTGQAEAVRHGISRALCILDPELRGVLKKAGLLTRDSREKERKKYGQRGARARFQYSKR.

Residues 108 to 130 are disordered; sequence SREKERKKYGQRGARARFQYSKR.

This sequence belongs to the universal ribosomal protein uS9 family.

In Solidesulfovibrio magneticus (strain ATCC 700980 / DSM 13731 / RS-1) (Desulfovibrio magneticus), this protein is Small ribosomal subunit protein uS9.